Reading from the N-terminus, the 138-residue chain is ATP synthase epsilon chain (138 aa).

This sequence belongs to the ATPase epsilon chain family. In terms of assembly, F-type ATPases have 2 components, CF(1) - the catalytic core - and CF(0) - the membrane proton channel. CF(1) has five subunits: alpha(3), beta(3), gamma(1), delta(1), epsilon(1). CF(0) has three main subunits: a, b and c.

The protein resides in the cell membrane. Functionally, produces ATP from ADP in the presence of a proton gradient across the membrane. The protein is ATP synthase epsilon chain of Streptococcus equi subsp. zooepidemicus (strain H70).